The sequence spans 435 residues: Trigger factor (435 aa).

A PPIase FKBP-type domain is found at 163-248 (GDYVTFDFKG…IKEIKVKELP (86 aa)).

This sequence belongs to the FKBP-type PPIase family. Tig subfamily.

Its subcellular location is the cytoplasm. It catalyses the reaction [protein]-peptidylproline (omega=180) = [protein]-peptidylproline (omega=0). In terms of biological role, involved in protein export. Acts as a chaperone by maintaining the newly synthesized protein in an open conformation. Functions as a peptidyl-prolyl cis-trans isomerase. This chain is Trigger factor, found in Geotalea daltonii (strain DSM 22248 / JCM 15807 / FRC-32) (Geobacter daltonii).